A 128-amino-acid chain; its full sequence is uncharacterized protein (128 aa).

This is an uncharacterized protein from Mycobacterium bovis (strain ATCC BAA-935 / AF2122/97).